The following is a 628-amino-acid chain: tRNA 5-methylaminomethyl-2-thiouridine biosynthesis bifunctional protein MnmC (628 aa).

The tract at residues 1 to 237 (MSSYSPLVPP…KWHMTVGVRE (237 aa)) is tRNA (mnm(5)s(2)U34)-methyltransferase. Positions 265 to 628 (VGGGLAGAGI…ADLLAAVAPR (364 aa)) are FAD-dependent cmnm(5)s(2)U34 oxidoreductase.

This sequence in the N-terminal section; belongs to the methyltransferase superfamily. tRNA (mnm(5)s(2)U34)-methyltransferase family. It in the C-terminal section; belongs to the DAO family. FAD serves as cofactor.

It is found in the cytoplasm. It carries out the reaction 5-aminomethyl-2-thiouridine(34) in tRNA + S-adenosyl-L-methionine = 5-methylaminomethyl-2-thiouridine(34) in tRNA + S-adenosyl-L-homocysteine + H(+). Functionally, catalyzes the last two steps in the biosynthesis of 5-methylaminomethyl-2-thiouridine (mnm(5)s(2)U) at the wobble position (U34) in tRNA. Catalyzes the FAD-dependent demodification of cmnm(5)s(2)U34 to nm(5)s(2)U34, followed by the transfer of a methyl group from S-adenosyl-L-methionine to nm(5)s(2)U34, to form mnm(5)s(2)U34. This Bordetella petrii (strain ATCC BAA-461 / DSM 12804 / CCUG 43448) protein is tRNA 5-methylaminomethyl-2-thiouridine biosynthesis bifunctional protein MnmC.